Here is a 614-residue protein sequence, read N- to C-terminus: Autophagy-related protein 22-1 (614 aa).

The interval 1–29 (MQNCTNSPEDQAASVCPPPPQFPGDDTRP) is disordered. A glycan (N-linked (GlcNAc...) asparagine) is linked at asparagine 3. Helical transmembrane passes span 41 to 61 (YGWA…PITL), 126 to 146 (TASF…ILII), 160 to 180 (MLLV…LAVV), and 185 to 205 (LLGG…FVLL). The interval 229-254 (PTGTSHDSTSTADGPGQTDGTETTSL) is disordered. Polar residues predominate over residues 230–254 (TGTSHDSTSTADGPGQTDGTETTSL). A run of 8 helical transmembrane segments spans residues 291–311 (GIGI…LVVV), 322–342 (LVLF…AMWL), 383–403 (ILLF…VSGT), 417–437 (AALG…AFSW), 452–472 (IVAC…GFIP), 486–506 (WEMY…SSYC), 523–545 (YALY…GIIT), and 554–574 (AFVF…LVDV).

This sequence belongs to the ATG22 family.

It is found in the vacuole membrane. Functionally, vacuolar effluxer which mediate the efflux of amino acids resulting from autophagic degradation. The release of autophagic amino acids allows the maintenance of protein synthesis and viability during nitrogen starvation. This chain is Autophagy-related protein 22-1 (atg22-1), found in Aspergillus niger (strain ATCC MYA-4892 / CBS 513.88 / FGSC A1513).